The following is a 133-amino-acid chain: Small ribosomal subunit protein uS8 (133 aa).

Belongs to the universal ribosomal protein uS8 family. As to quaternary structure, part of the 30S ribosomal subunit. Contacts proteins S5 and S12.

Functionally, one of the primary rRNA binding proteins, it binds directly to 16S rRNA central domain where it helps coordinate assembly of the platform of the 30S subunit. The protein is Small ribosomal subunit protein uS8 of Oenococcus oeni (strain ATCC BAA-331 / PSU-1).